A 183-amino-acid chain; its full sequence is Protein jagunal homolog 1-B (183 aa).

Over 1–39 the chain is Cytoplasmic; sequence MASRAGPRATGTDGSDYQHRERVASHYQMSVALKSEIKK. Residues 40–60 traverse the membrane as a helical segment; sequence LNIAHAVVWFLVAAQVLVSQL. Residues 61–71 are Lumenal-facing; sequence NLVSHKVVASP. A helical transmembrane segment spans residues 72–92; the sequence is YQWEYTYLLSIIPTVFSFMAL. Residues 93 to 99 are Cytoplasmic-facing; that stretch reads PKNNISY. A helical transmembrane segment spans residues 100-120; it reads LVISMISGGLFCIGPILYGGM. At 121 to 137 the chain is on the lumenal side; sequence EMFPVAQQLYRHGKAYR. Residues 138 to 158 traverse the membrane as a helical segment; the sequence is FIFGFSAVSIMYLVLIISVQV. Residues 159–183 are Cytoplasmic-facing; that stretch reads HGWQIYYSKKLLDAWFTNTQDKKKK.

The protein belongs to the jagunal family.

The protein localises to the endoplasmic reticulum membrane. Endoplasmic reticulum transmembrane protein involved in vesicle-mediated transport, which is required for neutrophil function. The sequence is that of Protein jagunal homolog 1-B (jagn1b) from Danio rerio (Zebrafish).